Here is a 322-residue protein sequence, read N- to C-terminus: tRNA N6-adenosine threonylcarbamoyltransferase (322 aa).

Residues H109 and H113 each contribute to the Fe cation site. Substrate is bound by residues 131-135, D164, G177, D181, and N277; that span reads LISGG. Residue D303 participates in Fe cation binding.

This sequence belongs to the KAE1 / TsaD family. It depends on Fe(2+) as a cofactor.

Its subcellular location is the cytoplasm. The catalysed reaction is L-threonylcarbamoyladenylate + adenosine(37) in tRNA = N(6)-L-threonylcarbamoyladenosine(37) in tRNA + AMP + H(+). In terms of biological role, required for the formation of a threonylcarbamoyl group on adenosine at position 37 (t(6)A37) in tRNAs that read codons beginning with adenine. Is involved in the transfer of the threonylcarbamoyl moiety of threonylcarbamoyl-AMP (TC-AMP) to the N6 group of A37, together with TsaE and TsaB. TsaD likely plays a direct catalytic role in this reaction. The sequence is that of tRNA N6-adenosine threonylcarbamoyltransferase from Mesomycoplasma hyopneumoniae (strain 232) (Mycoplasma hyopneumoniae).